Consider the following 668-residue polypeptide: Acetoin catabolism regulatory protein (668 aa).

A Sigma-54 factor interaction domain is found at 341-570 (LTGGDAALQL…NVLEYARAVC (230 aa)). ATP-binding positions include 369-376 (GETGSGKE) and 433-442 (ADGGTLFLDE). Low complexity predominate over residues 586–606 (GPAPSAALPQPGPAQSPAAAP). Residues 586–611 (GPAPSAALPQPGPAQSPAAAPFDPHQ) are disordered. A DNA-binding region (H-T-H motif) is located at residues 630–649 (LSAVARQIGVSRMTLYRRME).

In terms of biological role, required for sigma-54-dependent transcription of acoXABC. The polypeptide is Acetoin catabolism regulatory protein (acoR) (Cupriavidus necator (strain ATCC 17699 / DSM 428 / KCTC 22496 / NCIMB 10442 / H16 / Stanier 337) (Ralstonia eutropha)).